A 405-amino-acid polypeptide reads, in one-letter code: Probable tRNA sulfurtransferase (405 aa).

Residues 60 to 165 enclose the THUMP domain; it reads QEVSASLKKI…PDAAYISHEE (106 aa). Residues 183 to 184, 208 to 209, Arg-265, Gly-287, and Gln-296 contribute to the ATP site; these read ML and HF.

The protein belongs to the ThiI family.

The protein localises to the cytoplasm. The enzyme catalyses [ThiI sulfur-carrier protein]-S-sulfanyl-L-cysteine + a uridine in tRNA + 2 reduced [2Fe-2S]-[ferredoxin] + ATP + H(+) = [ThiI sulfur-carrier protein]-L-cysteine + a 4-thiouridine in tRNA + 2 oxidized [2Fe-2S]-[ferredoxin] + AMP + diphosphate. It catalyses the reaction [ThiS sulfur-carrier protein]-C-terminal Gly-Gly-AMP + S-sulfanyl-L-cysteinyl-[cysteine desulfurase] + AH2 = [ThiS sulfur-carrier protein]-C-terminal-Gly-aminoethanethioate + L-cysteinyl-[cysteine desulfurase] + A + AMP + 2 H(+). It participates in cofactor biosynthesis; thiamine diphosphate biosynthesis. Functionally, catalyzes the ATP-dependent transfer of a sulfur to tRNA to produce 4-thiouridine in position 8 of tRNAs, which functions as a near-UV photosensor. Also catalyzes the transfer of sulfur to the sulfur carrier protein ThiS, forming ThiS-thiocarboxylate. This is a step in the synthesis of thiazole, in the thiamine biosynthesis pathway. The sulfur is donated as persulfide by IscS. The chain is Probable tRNA sulfurtransferase from Streptococcus suis (strain 98HAH33).